A 419-amino-acid chain; its full sequence is Homeobox-containing protein 1 (419 aa).

In terms of domain architecture, HNF-p1 spans 18–49; the sequence is DEPRFTIEQIDLLQRLRRTGMTKHEILHALET. A disordered region spans residues 56-152; the sequence is EHSDKFGRRS…GQRSYSFEAS (97 aa). A Glycyl lysine isopeptide (Lys-Gly) (interchain with G-Cter in SUMO2) cross-link involves residue K60. 2 stretches are compositionally biased toward low complexity: residues 64–73 and 81–93; these read RSSYGGSSYG and ASSS…TQTQ. A compositionally biased stretch (polar residues) spans 94 to 132; the sequence is HSGMSPSPSNSYDTSPLPCTTNQNGRENNDRLSTSNGKM. K131 participates in a covalent cross-link: Glycyl lysine isopeptide (Lys-Gly) (interchain with G-Cter in SUMO2). The POU-specific atypical domain maps to 145-241; that stretch reads RSYSFEASEE…PGATLSMRPA (97 aa). Phosphoserine is present on S148. K161 is covalently cross-linked (Glycyl lysine isopeptide (Lys-Gly) (interchain with G-Cter in SUMO2)). A Phosphoserine modification is found at S170. Glycyl lysine isopeptide (Lys-Gly) (interchain with G-Cter in SUMO2) cross-links involve residues K174, K217, and K310. The segment at residues 267–341 is a DNA-binding region (homeobox); that stretch reads RRGSRFTWRK…NRRKEIKRRA (75 aa). The interval 352–384 is disordered; that stretch reads IDVQSPGGHSNSDDVDGNDYSEQDDSTSHSDHQ. A compositionally biased stretch (acidic residues) spans 364–376; that stretch reads DDVDGNDYSEQDD. K412 participates in a covalent cross-link: Glycyl lysine isopeptide (Lys-Gly) (interchain with G-Cter in SUMO1); alternate. A Glycyl lysine isopeptide (Lys-Gly) (interchain with G-Cter in SUMO2); alternate cross-link involves residue K412.

In terms of assembly, associates with the telomerase holoenzyme complex. Interacts with DKC1, XRCC6 and COIL.

The protein resides in the nucleus. It localises to the cytoplasm. It is found in the chromosome. The protein localises to the telomere. Its subcellular location is the cajal body. The protein resides in the PML body. Binds directly to 5'-TTAGGG-3' repeats in telomeric DNA. Associates with the telomerase complex at sites of active telomere processing and positively regulates telomere elongation. Important for TERT binding to chromatin, indicating a role in recruitment of the telomerase complex to telomeres. Also plays a role in the alternative lengthening of telomeres (ALT) pathway in telomerase-negative cells where it promotes formation and/or maintenance of ALT-associated promyelocytic leukemia bodies (APBs). Enhances formation of telomere C-circles in ALT cells, suggesting a possible role in telomere recombination. Might also be involved in the DNA damage response at telomeres. The sequence is that of Homeobox-containing protein 1 (Hmbox1) from Mus musculus (Mouse).